Consider the following 130-residue polypeptide: Small ribosomal subunit protein uS11c (130 aa).

Belongs to the universal ribosomal protein uS11 family. As to quaternary structure, part of the 30S ribosomal subunit.

Its subcellular location is the plastid. It is found in the chloroplast. This is Small ribosomal subunit protein uS11c from Chlorella vulgaris (Green alga).